The following is an 821-amino-acid chain: Bifunctional dethiobiotin synthetase/7,8-diamino-pelargonic acid aminotransferase, mitochondrial (821 aa).

The tract at residues 28–283 (SPAFAVFGAN…VHVLPPIPED (256 aa)) is dethiobiotin synthetase. 39-44 (GVGKTL) contacts ATP. Position 43 (T43) interacts with Mg(2+). T72 serves as a coordination point for substrate. E194 contacts Mg(2+). 194-197 (ETAG) is an ATP binding site. Residues 316–820 (RLNSMQRKSK…AKVHRRLQKL (505 aa)) form a 7,8-diamino-pelargonic acid aminotransferase region. 374-375 (WW) contributes to the (8S)-8-amino-7-oxononanoate binding site. 436–437 (GS) is a pyridoxal 5'-phosphate binding site. Residue Y482 participates in (8S)-8-amino-7-oxononanoate binding. D626 serves as a coordination point for pyridoxal 5'-phosphate. (8S)-8-amino-7-oxononanoate contacts are provided by K655 and G689. Residue K655 is modified to N6-(pyridoxal phosphate)lysine. Residue S691 participates in pyridoxal 5'-phosphate binding. Residue R787 participates in (8S)-8-amino-7-oxononanoate binding.

In the N-terminal section; belongs to the dethiobiotin synthetase family. This sequence in the C-terminal section; belongs to the class-III pyridoxal-phosphate-dependent aminotransferase family. BioA subfamily. The cofactor is Mg(2+). Pyridoxal 5'-phosphate is required as a cofactor.

Its subcellular location is the mitochondrion. It catalyses the reaction (7R,8S)-7,8-diammoniononanoate + CO2 + ATP = (4R,5S)-dethiobiotin + ADP + phosphate + 3 H(+). The enzyme catalyses (8S)-8-amino-7-oxononanoate + S-adenosyl-L-methionine = S-adenosyl-4-methylsulfanyl-2-oxobutanoate + (7R,8S)-7,8-diammoniononanoate. It participates in cofactor biosynthesis; biotin biosynthesis; biotin from 7,8-diaminononanoate: step 1/2. Its pathway is cofactor biosynthesis; biotin biosynthesis; 7,8-diaminononanoate from 8-amino-7-oxononanoate (SAM route): step 1/1. Functionally, bifunctional enzyme that catalyzes two different reactions involved in the biotin biosynthesis. Its function is as follows. Catalyzes a mechanistically unusual reaction, the ATP-dependent insertion of CO2 between the N7 and N8 nitrogen atoms of 7,8-diaminopelargonic acid (DAPA) to form an ureido ring. In terms of biological role, catalyzes the transfer of the alpha-amino group from S-adenosyl-L-methionine (SAM) to 7-keto-8-aminopelargonic acid (KAPA) to form 7,8-diaminopelargonic acid (DAPA). It is the only aminotransferase known to utilize SAM as an amino donor. This is Bifunctional dethiobiotin synthetase/7,8-diamino-pelargonic acid aminotransferase, mitochondrial (BIO3-BIO1) from Oryza sativa subsp. japonica (Rice).